The primary structure comprises 505 residues: Deoxyguanosinetriphosphate triphosphohydrolase (505 aa).

Positions 66 to 273 (RLTHSMEVQQ…MEAADDISYC (208 aa)) constitute an HD domain.

Belongs to the dGTPase family. Type 1 subfamily. As to quaternary structure, homotetramer. Requires Mg(2+) as cofactor.

The enzyme catalyses dGTP + H2O = 2'-deoxyguanosine + triphosphate + H(+). Functionally, dGTPase preferentially hydrolyzes dGTP over the other canonical NTPs. This Salmonella choleraesuis (strain SC-B67) protein is Deoxyguanosinetriphosphate triphosphohydrolase.